Here is a 285-residue protein sequence, read N- to C-terminus: Pantothenate synthetase (285 aa).

30–37 (MGFLHEGH) serves as a coordination point for ATP. The Proton donor role is filled by His37. Gln61 is a binding site for (R)-pantoate. Gln61 is a binding site for beta-alanine. 147–150 (GQKD) serves as a coordination point for ATP. Gln153 contributes to the (R)-pantoate binding site. ATP is bound by residues Val176 and 184-187 (KSSR).

It belongs to the pantothenate synthetase family. As to quaternary structure, homodimer.

It is found in the cytoplasm. It catalyses the reaction (R)-pantoate + beta-alanine + ATP = (R)-pantothenate + AMP + diphosphate + H(+). The protein operates within cofactor biosynthesis; (R)-pantothenate biosynthesis; (R)-pantothenate from (R)-pantoate and beta-alanine: step 1/1. In terms of biological role, catalyzes the condensation of pantoate with beta-alanine in an ATP-dependent reaction via a pantoyl-adenylate intermediate. In Listeria welshimeri serovar 6b (strain ATCC 35897 / DSM 20650 / CCUG 15529 / CIP 8149 / NCTC 11857 / SLCC 5334 / V8), this protein is Pantothenate synthetase.